A 210-amino-acid chain; its full sequence is 3,4-dihydroxy-2-butanone 4-phosphate synthase (210 aa).

D-ribulose 5-phosphate contacts are provided by residues 33 to 34, D38, 146 to 150, and E170; these read RE and RRGHT. E34 contacts Mg(2+). Position 149 (H149) interacts with Mg(2+).

The protein belongs to the DHBP synthase family. In terms of assembly, homodimer. Mg(2+) serves as cofactor. Mn(2+) is required as a cofactor.

The catalysed reaction is D-ribulose 5-phosphate = (2S)-2-hydroxy-3-oxobutyl phosphate + formate + H(+). The protein operates within cofactor biosynthesis; riboflavin biosynthesis; 2-hydroxy-3-oxobutyl phosphate from D-ribulose 5-phosphate: step 1/1. Its function is as follows. Catalyzes the conversion of D-ribulose 5-phosphate to formate and 3,4-dihydroxy-2-butanone 4-phosphate. In Chromobacterium violaceum (strain ATCC 12472 / DSM 30191 / JCM 1249 / CCUG 213 / NBRC 12614 / NCIMB 9131 / NCTC 9757 / MK), this protein is 3,4-dihydroxy-2-butanone 4-phosphate synthase.